We begin with the raw amino-acid sequence, 577 residues long: Aspartate--tRNA(Asp/Asn) ligase (577 aa).

Glutamate 171 contacts L-aspartate. The segment at glutamine 195–lysine 198 is aspartate. Arginine 217 serves as a coordination point for L-aspartate. ATP-binding positions include arginine 217 to glutamate 219 and glutamine 226. Histidine 444 lines the L-aspartate pocket. Glutamate 474 is an ATP binding site. Arginine 481 provides a ligand contact to L-aspartate. Residue glycine 526 to arginine 529 coordinates ATP.

This sequence belongs to the class-II aminoacyl-tRNA synthetase family. Type 1 subfamily. Homodimer.

The protein resides in the cytoplasm. The enzyme catalyses tRNA(Asx) + L-aspartate + ATP = L-aspartyl-tRNA(Asx) + AMP + diphosphate. Aspartyl-tRNA synthetase with relaxed tRNA specificity since it is able to aspartylate not only its cognate tRNA(Asp) but also tRNA(Asn). Reaction proceeds in two steps: L-aspartate is first activated by ATP to form Asp-AMP and then transferred to the acceptor end of tRNA(Asp/Asn). The protein is Aspartate--tRNA(Asp/Asn) ligase of Helicobacter pylori (strain P12).